Reading from the N-terminus, the 608-residue chain is Protein FAM151A (608 aa).

A helical membrane pass occupies residues 14-34 (WILAGSVTVTLVLAISLILGL). Over residues 586 to 596 (VSSNRPSSRIG) the composition is skewed to polar residues. A disordered region spans residues 586–608 (VSSNRPSSRIGPSSVEGFPGESR).

This sequence belongs to the menorin family.

It is found in the membrane. This chain is Protein FAM151A (Fam151a), found in Mus musculus (Mouse).